The sequence spans 120 residues: Large ribosomal subunit protein uL14 (120 aa).

Belongs to the universal ribosomal protein uL14 family. In terms of assembly, part of the 50S ribosomal subunit. Forms a cluster with proteins L3 and L19. In the 70S ribosome, L14 and L19 interact and together make contacts with the 16S rRNA in bridges B5 and B8.

Its function is as follows. Binds to 23S rRNA. Forms part of two intersubunit bridges in the 70S ribosome. The protein is Large ribosomal subunit protein uL14 of Karelsulcia muelleri (strain GWSS) (Sulcia muelleri).